The sequence spans 429 residues: Serine--tRNA ligase (429 aa).

L-serine is bound at residue 236–238 (TAE). 267–269 (RRE) contacts ATP. L-serine is bound at residue Glu290. ATP is bound at residue 354-357 (EISS). Ser390 contacts L-serine.

This sequence belongs to the class-II aminoacyl-tRNA synthetase family. Type-1 seryl-tRNA synthetase subfamily. Homodimer. The tRNA molecule binds across the dimer.

The protein resides in the cytoplasm. It catalyses the reaction tRNA(Ser) + L-serine + ATP = L-seryl-tRNA(Ser) + AMP + diphosphate + H(+). The enzyme catalyses tRNA(Sec) + L-serine + ATP = L-seryl-tRNA(Sec) + AMP + diphosphate + H(+). It participates in aminoacyl-tRNA biosynthesis; selenocysteinyl-tRNA(Sec) biosynthesis; L-seryl-tRNA(Sec) from L-serine and tRNA(Sec): step 1/1. Catalyzes the attachment of serine to tRNA(Ser). Is also able to aminoacylate tRNA(Sec) with serine, to form the misacylated tRNA L-seryl-tRNA(Sec), which will be further converted into selenocysteinyl-tRNA(Sec). The protein is Serine--tRNA ligase of Gloeobacter violaceus (strain ATCC 29082 / PCC 7421).